Consider the following 610-residue polypeptide: Menin (610 aa).

Residues 214–390 (GVAERSWLYL…SLLEAGEERP (177 aa)) are interaction with FANCD2. The interval 462–552 (AEAAEAEELW…SPPPEGPVLT (91 aa)) is disordered. The segment covering 484–500 (RRESKPEEPPPPKKPAL) has biased composition (basic and acidic residues). Phosphoserine occurs at positions 487 and 543. A compositionally biased stretch (pro residues) spans 537–548 (APAPAASPPPEG). Phosphothreonine is present on T594.

Component of the MLL-HCF complex, at least composed of KMT2A/MLL1, MEN1, ASH2L, RBBP5, DPY30, WDR5, HCFC1 and HCFC2. Component of the menin-associated histone methyltransferase complex, at least composed of KMT2B/MLL4, MEN1, ASH2L, RBBP5, DPY30 and WDR5. Interacts with POLR2B. Interacts with POLR2A phosphorylated at 'Ser-5', but not with the unphosphorylated, nor 'Ser-2' phosphorylated POLR2A forms. Interacts with FANCD2 and DBF4. Interacts with SMAD3, but not with SMAD2, nor SMAD4. Directly interacts with NFKB1, NFKB2 and RELA. Interacts with JUND (via MBM motif); inhibits the interaction of JUND with MAPK10 and the phosphorylation of JUND by MAP kinases MAPK8 and MAPK10. Interacts with KMT2A (via MBM motif). The KMT2A-MEN1 complex interacts with PSIP1 with a greater affinity as MEN1 enhances interaction of KMT2A with PSIP1.

Its subcellular location is the nucleus. Functionally, essential component of a MLL/SET1 histone methyltransferase (HMT) complex, a complex that specifically methylates 'Lys-4' of histone H3 (H3K4). Functions as a transcriptional regulator. Binds to the TERT promoter and represses telomerase expression. Plays a role in TGFB1-mediated inhibition of cell-proliferation, possibly regulating SMAD3 transcriptional activity. Represses JUND-mediated transcriptional activation on AP1 sites, as well as that mediated by NFKB subunit RELA. Positively regulates HOXC8 and HOXC6 gene expression. May be involved in normal hematopoiesis through the activation of HOXA9 expression. May be involved in DNA repair. This chain is Menin (MEN1), found in Canis lupus familiaris (Dog).